Reading from the N-terminus, the 193-residue chain is Non-specific lipid transfer protein GPI-anchored 2 (193 aa).

An N-terminal signal peptide occupies residues 1–22; it reads MSNVVVIAVVLIVASLTGHVSA. 4 disulfides stabilise this stretch: cysteine 38–cysteine 83, cysteine 48–cysteine 67, cysteine 68–cysteine 110, and cysteine 81–cysteine 120. Asparagine 44 carries an N-linked (GlcNAc...) asparagine glycan. Residues 143–164 are disordered; the sequence is APGSMSGAESPGGFGSGPSASR. Residue glycine 165 is the site of GPI-anchor amidated glycine attachment. Positions 166–193 are cleaved as a propeptide — removed in mature form; that stretch reads SDAPSSAPYSLFLNLIIFPLAFAFYIFC.

This sequence belongs to the plant LTP family. Post-translationally, O-glycosylated on hydroxyprolines; noncontiguous hydroxylproline residues are glycosylated with arabinogalactan. Up-regulated in the epidermis of top stems. Expressed in roots, cotyledons, seedlings, leaves, stems, buds, flower and silique walls. Preferentially expressed in the shoot apical meristem and the root meristem. Also detected in expanding leaves and petals, developing flowers, and elongating pistils, stamens and siliques.

Its subcellular location is the cell membrane. In terms of biological role, lipid transfer protein that, together with LTPG1, binds to lipids and functions as a component of the cuticular lipid export machinery that performs extensive export of intracellular lipids (e.g. C29 alkane) from epidermal cells to the surface to build the cuticular wax layer and silique walls. Contributes to pre-invasive defense against some non-host powdery mildew pathogens by preventing the penetration of the epidermal cell wall by the fungal agents (e.g. Blumeria graminis f. sp. hordei (Bgh)). Involved in seed and ovule maturation and development, probably by regulating the fatty acids homeostasis during suberin and sporopollenin biosynthesis or deposition. The protein is Non-specific lipid transfer protein GPI-anchored 2 of Arabidopsis thaliana (Mouse-ear cress).